The primary structure comprises 410 residues: 2-oxoglutarate-dependent dioxygenase AOP3 (410 aa).

The 98-residue stretch at 258 to 355 (GNASVGAKEA…RYAAALFSYP (98 aa)) folds into the Fe2OG dioxygenase domain. Positions 278, 280, and 335 each coordinate Fe cation. Arginine 346 serves as a coordination point for 2-oxoglutarate.

Belongs to the iron/ascorbate-dependent oxidoreductase family. Fe(2+) is required as a cofactor.

Functionally, 2-oxoglutarate-dependent dioxygenase involved in glucosinolates biosynthesis. Catalyzes the conversion of methylsulfinylalkyl glucosinolates to hydroxyalkyl glucosinolates. This is 2-oxoglutarate-dependent dioxygenase AOP3 (AOP3) from Arabidopsis thaliana (Mouse-ear cress).